A 511-amino-acid polypeptide reads, in one-letter code: Maturase K (511 aa).

It belongs to the intron maturase 2 family. MatK subfamily.

It localises to the plastid. Its subcellular location is the chloroplast. Its function is as follows. Usually encoded in the trnK tRNA gene intron. Probably assists in splicing its own and other chloroplast group II introns. This Lolium perenne (Perennial ryegrass) protein is Maturase K.